The following is a 482-amino-acid chain: GPI mannosyltransferase 3 (482 aa).

Residues 12–32 (LFAFIFIFRLANSFAIETFFQ) traverse the membrane as a helical segment. N-linked (GlcNAc...) asparagine glycosylation occurs at N80. A run of 4 helical transmembrane segments spans residues 114 to 134 (KLAW…YVIT), 137 to 155 (FSNN…FWPW), 175 to 195 (IIRP…LISI), and 199 to 219 (LKWV…NTAL). The N-linked (GlcNAc...) asparagine glycan is linked to N242. The next 3 membrane-spanning stretches (helical) occupy residues 252 to 272 (WHFY…PLMI), 274 to 294 (GLKK…FSLI), and 324 to 344 (FVLI…NVHE).

The protein belongs to the glycosyltransferase 22 family. PIGB subfamily.

It localises to the endoplasmic reticulum membrane. It functions in the pathway glycolipid biosynthesis; glycosylphosphatidylinositol-anchor biosynthesis. Functionally, mannosyltransferase involved in glycosylphosphatidylinositol-anchor biosynthesis. Transfers the third mannose to Man2-GlcN-acyl-PI during GPI precursor assembly. This is GPI mannosyltransferase 3 (GPI10) from Candida albicans (strain SC5314 / ATCC MYA-2876) (Yeast).